We begin with the raw amino-acid sequence, 416 residues long: Phosphoribosylamine--glycine ligase (416 aa).

The ATP-grasp domain maps to 107 to 303 (KDVMACAGVP…LAGLLMAAAT (197 aa)). 133-184 (LAAFGAPYVVKDDGLAAGKGVVVTDDVEAARAHANACDRVVVEEFLDGPEVS) contributes to the ATP binding site. Residues glutamate 273 and asparagine 275 each contribute to the Mg(2+) site.

It belongs to the GARS family. Mg(2+) is required as a cofactor. Mn(2+) serves as cofactor.

The catalysed reaction is 5-phospho-beta-D-ribosylamine + glycine + ATP = N(1)-(5-phospho-beta-D-ribosyl)glycinamide + ADP + phosphate + H(+). The protein operates within purine metabolism; IMP biosynthesis via de novo pathway; N(1)-(5-phospho-D-ribosyl)glycinamide from 5-phospho-alpha-D-ribose 1-diphosphate: step 2/2. This is Phosphoribosylamine--glycine ligase from Streptomyces coelicolor (strain ATCC BAA-471 / A3(2) / M145).